A 658-amino-acid chain; its full sequence is Glycogen debranching enzyme (658 aa).

Asp-336 acts as the Nucleophile in catalysis. Glu-371 functions as the Proton donor in the catalytic mechanism. Residues 459 to 484 (EANGEENRDGTNSNYSDNHGKEGLGG) are disordered.

It belongs to the glycosyl hydrolase 13 family.

It carries out the reaction Hydrolysis of (1-&gt;6)-alpha-D-glucosidic linkages to branches with degrees of polymerization of three or four glucose residues in limit dextrin.. Its pathway is glycan degradation; glycogen degradation. In terms of biological role, removes maltotriose and maltotetraose chains that are attached by 1,6-alpha-linkage to the limit dextrin main chain, generating a debranched limit dextrin. This Salmonella enteritidis PT4 (strain P125109) protein is Glycogen debranching enzyme.